The sequence spans 145 residues: uncharacterized protein (145 aa).

The disordered stretch occupies residues 1–25; it reads MSENNENDGFNLDPDVKEELEETKS. Basic and acidic residues predominate over residues 14–25; the sequence is PDVKEELEETKS.

This is an uncharacterized protein from His1 virus (isolate Australia/Victoria) (His1V).